The following is a 327-amino-acid chain: E3 ubiquitin ligase RNF121 (327 aa).

Ala-2 bears the N-acetylalanine mark. A run of 5 helical transmembrane segments spans residues 50 to 70 (MHAE…LLLV), 79 to 99 (SYNM…TVKL), 100 to 120 (HWWR…FVTF), 148 to 168 (ATGI…NLLF), and 172 to 192 (PEDA…YGVL). The segment at 226-276 (CAVCGQQIFVDVSEEGIIENTYRLSCNHVFHEFCIRGWCIVGKKQTCPYCK) adopts an RING-type; atypical zinc-finger fold. Residues 306 to 326 (LVAWQPVIIGVVQGINYILGL) form a helical membrane-spanning segment.

It belongs to the RNF121 family.

The protein localises to the endoplasmic reticulum membrane. It catalyses the reaction S-ubiquitinyl-[E2 ubiquitin-conjugating enzyme]-L-cysteine + [acceptor protein]-L-lysine = [E2 ubiquitin-conjugating enzyme]-L-cysteine + N(6)-ubiquitinyl-[acceptor protein]-L-lysine.. It participates in protein modification; protein ubiquitination. E3 ubiquitin ligase which accepts ubiquitin and transfers it to substrates thereby promoting their degradation by the endoplasmic reticulum-associated degradation (ERAD) pathway which is a pathway involved in ubiquitin-dependent degradation of misfolded endoplasmic reticulum proteins. May regulate the unfolded protein response to reduce endoplasmic reticulum stress. This Homo sapiens (Human) protein is E3 ubiquitin ligase RNF121 (RNF121).